Reading from the N-terminus, the 307-residue chain is L-carnitine dehydrogenase (307 aa).

Residue 8–13 participates in NAD(+) binding; sequence GTGVIG.

It belongs to the 3-hydroxyacyl-CoA dehydrogenase family. L-carnitine dehydrogenase subfamily. As to quaternary structure, homodimer.

It localises to the cytoplasm. The enzyme catalyses carnitine + NAD(+) = 3-dehydrocarnitine + NADH + H(+). The protein operates within amine and polyamine metabolism; carnitine metabolism. Its function is as follows. Catalyzes the NAD(+)-dependent oxidation of L-carnitine to 3-dehydrocarnitine. The sequence is that of L-carnitine dehydrogenase from Oceanobacillus iheyensis (strain DSM 14371 / CIP 107618 / JCM 11309 / KCTC 3954 / HTE831).